Consider the following 506-residue polypeptide: Maturase K (506 aa).

Belongs to the intron maturase 2 family. MatK subfamily.

Its subcellular location is the plastid. The protein localises to the chloroplast. In terms of biological role, usually encoded in the trnK tRNA gene intron. Probably assists in splicing its own and other chloroplast group II introns. This chain is Maturase K, found in Empetrum nigrum (Black crowberry).